A 249-amino-acid polypeptide reads, in one-letter code: tRNA pseudouridine synthase A (249 aa).

Asp-53 (nucleophile) is an active-site residue. Tyr-111 is a substrate binding site.

The protein belongs to the tRNA pseudouridine synthase TruA family. In terms of assembly, homodimer.

The catalysed reaction is uridine(38/39/40) in tRNA = pseudouridine(38/39/40) in tRNA. In terms of biological role, formation of pseudouridine at positions 38, 39 and 40 in the anticodon stem and loop of transfer RNAs. In Streptococcus equi subsp. zooepidemicus (strain MGCS10565), this protein is tRNA pseudouridine synthase A.